The chain runs to 119 residues: NAD(P)H-quinone oxidoreductase subunit M (119 aa).

The protein belongs to the complex I NdhM subunit family. In terms of assembly, NDH-1 can be composed of about 15 different subunits; different subcomplexes with different compositions have been identified which probably have different functions.

It localises to the cellular thylakoid membrane. The catalysed reaction is a plastoquinone + NADH + (n+1) H(+)(in) = a plastoquinol + NAD(+) + n H(+)(out). It catalyses the reaction a plastoquinone + NADPH + (n+1) H(+)(in) = a plastoquinol + NADP(+) + n H(+)(out). Its function is as follows. NDH-1 shuttles electrons from an unknown electron donor, via FMN and iron-sulfur (Fe-S) centers, to quinones in the respiratory and/or the photosynthetic chain. The immediate electron acceptor for the enzyme in this species is believed to be plastoquinone. Couples the redox reaction to proton translocation, and thus conserves the redox energy in a proton gradient. Cyanobacterial NDH-1 also plays a role in inorganic carbon-concentration. The chain is NAD(P)H-quinone oxidoreductase subunit M from Picosynechococcus sp. (strain ATCC 27264 / PCC 7002 / PR-6) (Agmenellum quadruplicatum).